We begin with the raw amino-acid sequence, 377 residues long: Succinyl-diaminopimelate desuccinylase (377 aa).

Residue histidine 67 coordinates Zn(2+). Aspartate 69 is an active-site residue. Aspartate 100 contacts Zn(2+). Glutamate 134 serves as the catalytic Proton acceptor. 3 residues coordinate Zn(2+): glutamate 135, glutamate 163, and histidine 349.

It belongs to the peptidase M20A family. DapE subfamily. Homodimer. Zn(2+) is required as a cofactor. The cofactor is Co(2+).

It carries out the reaction N-succinyl-(2S,6S)-2,6-diaminopimelate + H2O = (2S,6S)-2,6-diaminopimelate + succinate. The protein operates within amino-acid biosynthesis; L-lysine biosynthesis via DAP pathway; LL-2,6-diaminopimelate from (S)-tetrahydrodipicolinate (succinylase route): step 3/3. Its function is as follows. Catalyzes the hydrolysis of N-succinyl-L,L-diaminopimelic acid (SDAP), forming succinate and LL-2,6-diaminopimelate (DAP), an intermediate involved in the bacterial biosynthesis of lysine and meso-diaminopimelic acid, an essential component of bacterial cell walls. This is Succinyl-diaminopimelate desuccinylase from Haemophilus influenzae (strain PittGG).